We begin with the raw amino-acid sequence, 168 residues long: MAAATGAGRLRRAASALLLRSPRLPARELSAPARLYHKKVVDHYENPRNVGSLDKTSKNVGTGLVGAPACGDVMKLQIQVDEKGKIVDARFKTFGCGSAIASSSLATEWVKGKTVEEALTIKNTDIAKELCLPPVKLHCSMLAEDAIKAALADYKLKQESKKEEPEKQ.

The transit peptide at 1–35 (MAAATGAGRLRRAASALLLRSPRLPARELSAPARL) directs the protein to the mitochondrion. S15 carries the post-translational modification Phosphoserine. C70 acts as the Cysteine persulfide intermediate in catalysis. Cysteine persulfide is present on C70. The Zn(2+) site is built by D72, C96, and C139. The active-site Cysteine persulfide intermediate is C139. C139 carries the cysteine persulfide modification.

This sequence belongs to the NifU family. Homodimer; Tyr-36-mediated dimerization of two iron- and sulfide-containing ISCU subunit bind to the cysteine desulfurase complex. Component of the mitochondrial core iron-sulfur cluster (ISC) complex composed of NFS1, LYRM4, NDUFAB1, ISCU, FXN, and FDX2; this complex is a heterohexamer containing two copies of each monomer. Interacts (D-state) with NFS1 (homodimer form); each monomer interacts with the C-terminal regions of each NFS1 monomer. Interacts (monomer form) with FXN (via ferrous form); the interaction is possible when both are bound to the dimeric form of the cysteine desulfurase complex (NFS1:LYRM4) and enhances FXN interaction to the dimeric form of the cysteine desulfurase complex (NFS1:LYRM4). Interacts with GLRX5. Interacts (D-state) with HSPA9. Interacts (S-state) with HSCB; this interaction stimulates the ATPase activity of HSPA9. Component of a complex composed of FXN, NFS1, LYRM4 and ISCU. Post-translationally, cysteine persulfide is reduced by thiol-containing molecules such as glutathione and L-cysteine. In terms of processing, phosphorylation at Ser-15 is required for ISCU protein stabilization in the cytosol, whereas dephosphorylation of Ser-15, due to the inhibition of mTORC1 (mammalian target of rapamycin complex 1) complex, leads to degradation of the precursor form and ultimately to a decrease in the mitochondrial mature form.

It localises to the mitochondrion. Mitochondrial scaffold protein, of the core iron-sulfur cluster (ISC) assembly complex, that provides the structural architecture on which the [2Fe-2S] clusters are assembled. The core iron-sulfur cluster (ISC) assembly complex is involved in the de novo synthesis of a [2Fe-2S] cluster, the first step of the mitochondrial iron-sulfur protein biogenesis. This process is initiated by the cysteine desulfurase complex (NFS1:LYRM4:NDUFAB1) that produces persulfide which is delivered on the scaffold protein ISCU in a FXN-dependent manner. Then this complex is stabilized by FDX2 which provides reducing equivalents to accomplish the [2Fe-2S] cluster assembly. Finally, the [2Fe-2S] cluster is transferred from ISCU to chaperone proteins, including HSCB, HSPA9 and GLRX5. Exists as two slow interchanging conformational states, a structured (S) and disordered (D) form. May modulate NFS1 desulfurase activity in a zinc-dependent manner. Modulates the interaction between FXN and the cysteine desulfurase complex. This is Iron-sulfur cluster assembly enzyme ISCU from Mus musculus (Mouse).